Consider the following 668-residue polypeptide: Phosphatidylinositol 4-phosphate 5-kinase type-1 gamma (668 aa).

The tract at residues 45–67 (SMTAQPGPGHGKKLGHRGVDASG) is disordered. Residues 75–443 (TSSTLKGAIQ…RFFKFMSNTV (369 aa)) enclose the PIPK domain. N6-acetyllysine occurs at positions 265 and 268. R459 is modified (asymmetric dimethylarginine; alternate). Omega-N-methylarginine; alternate is present on R459. Residues 526–535 (TTLSSTSLSI) are compositionally biased toward low complexity. Disordered regions lie at residues 526-578 (TTLS…ITVQ) and 593-642 (EDAG…YFPT). At S555 the chain carries Phosphoserine. Y639 is modified (phosphotyrosine; by EGFR). The mediates interaction with TLN2 stretch occupies residues 641-668 (PTDERSWVYSPLHYSAQAPPASDGESDT). The residue at position 649 (Y649) is a Phosphotyrosine; by CSK. Position 650 is a phosphoserine; by CDK5, MAPK1 and CDK1 (S650). A phosphoserine mark is found at S662 and S666. T668 bears the Phosphothreonine mark.

Interacts with TLN1. Interacts with TLN2; interaction stimulates 1-phosphatidylinositol-4-phosphate 5-kinase activity. May compete with beta-integrins for the same binding site on TLN1 and TLN2. Interacts with ARF6; interaction stimulates 1-phosphatidylinositol-4-phosphate 5-kinase activity. Interacts with AP2B1. Interacts with AP2M1; phosphorylation of PIP5K1C by CSK disrupts the interaction; clathrin competes with PIP5K1C. Interacts with CDH1. Interacts with CSK. Interacts with PLCG1; interaction is abolished upon EGF stimulation. Interacts with LAPTM4B; promotes SNX5 association with LAPTM4B; kinase activity of PIP5K1C is required; interaction is regulated by phosphatidylinositol 4,5-bisphosphate generated by PIP5K1C. Post-translationally, phosphorylation on Ser-650 negatively regulates binding to TLN2 and is strongly stimulated in mitosis. Phosphorylation on Tyr-649 is necessary for targeting to focal adhesions. Phosphorylation on Ser-650 and Tyr-649 are mutually exclusive. Phosphorylated by SYK and CSK. Tyrosine phosphorylation is enhanced by PTK2 signaling. Phosphorylated at Tyr-639 upon EGF stimulation. Some studies suggest that phosphorylation on Tyr-649 enhances binding to tailins (TLN1 and TLN2). According to PubMed:15738269 phosphorylation at Tyr-649 does not directly enhance binding to tailins (TLN1 and TLN2) but may act indirectly by inhibiting phosphorylation at Ser-650. Acetylation at Lys-265 and Lys-268 seems to decrease lipid 1-phosphatidylinositol-4-phosphate 5-kinase activity. Deacetylation of these sites by SIRT1 positively regulates the exocytosis of TSH-containing granules from pituitary cells. As to expression, isoform 1 is strongly expressed in brain and also detected in heart and lung. In terms of tissue distribution, isoform 2 is strongly expressed in pancreas and liver and in lesser quantities in brain, heart, lung and kidney. Isoform 3 is detected in large amounts in heart and large intestine, is also present in lung, pancreas and thyroid, and to a lesser extent in brain, stomach and kidney.

Its subcellular location is the cell membrane. It localises to the endomembrane system. The protein localises to the cytoplasm. The protein resides in the cell junction. It is found in the focal adhesion. Its subcellular location is the adherens junction. It localises to the cell projection. The protein localises to the ruffle membrane. The protein resides in the phagocytic cup. It is found in the uropodium. Its subcellular location is the nucleus. The catalysed reaction is a 1,2-diacyl-sn-glycero-3-phospho-(1D-myo-inositol 4-phosphate) + ATP = a 1,2-diacyl-sn-glycero-3-phospho-(1D-myo-inositol-4,5-bisphosphate) + ADP + H(+). It carries out the reaction 1-octadecanoyl-2-(5Z,8Z,11Z,14Z)-eicosatetraenoyl-sn-glycero-3-phospho-1D-myo-inositol 4-phosphate + ATP = 1-octadecanoyl-2-(5Z,8Z,11Z,14Z)-eicosatetraenoyl-sn-glycero-3-phospho-1D-myo-inositol 4,5-bisphosphate + ADP + H(+). It catalyses the reaction 1-octadecanoyl-2-(9Z)-octadecenoyl-sn-glycero-3-phospho-1D-myo-inositol 4-phosphate + ATP = 1-octadecanoyl-2-(9Z)-octadecenoyl-sn-glycero-3-phospho-1D-myo-inositol 4,5-bisphosphate + ADP + H(+). The enzyme catalyses 1-octadecanoyl-2-(9Z)-octadecenoyl-sn-glycero-3-phospho-1D-myo-inositol + ATP = 1-octadecanoyl-2-(9Z)-octadecenoyl-sn-glycero-3-phospho-1D-myo-inositol 5-phosphate + ADP + H(+). The catalysed reaction is 1-octadecanoyl-2-(9Z,12Z)-octadecadienoyl-sn-glycero-3-phospho-1D-myo-inositol + ATP = 1-octadecanoyl-2-(9Z,12Z)-octadecadienoyl-sn-glycero-3-phospho-1D-myo-inositol 5-phosphate + ADP + H(+). It carries out the reaction 1-octadecanoyl-2-(5Z,8Z,11Z,14Z-eicosatetraenoyl)-sn-glycero-3-phospho-(1D-myo-inositol) + ATP = 1-octadecanoyl-2-(5Z,8Z,11Z,14Z)-eicosatetraenoyl-sn-glycero-3-phospho-1D-myo-inositol 5-phosphate + ADP + H(+). It catalyses the reaction 1,2-di-(9Z,12Z)-octadecadienoyl-sn-glycero-3-phospho-1D-myo-inositol + ATP = 1,2-di(9Z,12Z)-octadecadienoyl-sn-glycero-3-phospho-1D-myo-inositol 5-phosphate + ADP + H(+). Catalyzes the phosphorylation of phosphatidylinositol 4-phosphate (PtdIns(4)P/PI4P) to form phosphatidylinositol 4,5-bisphosphate (PtdIns(4,5)P2/PIP2), a lipid second messenger that regulates several cellular processes such as signal transduction, vesicle trafficking, actin cytoskeleton dynamics, cell adhesion, and cell motility. PtdIns(4,5)P2 can directly act as a second messenger or can be utilized as a precursor to generate other second messengers: inositol 1,4,5-trisphosphate (IP3), diacylglycerol (DAG) or phosphatidylinositol-3,4,5-trisphosphate (PtdIns(3,4,5)P3/PIP3). PIP5K1A-mediated phosphorylation of PtdIns(4)P is the predominant pathway for PtdIns(4,5)P2 synthesis. Together with PIP5K1A, is required for phagocytosis, both enzymes regulating different types of actin remodeling at sequential steps. Promotes particle attachment by generating the pool of PtdIns(4,5)P2 that induces controlled actin depolymerization to facilitate Fc-gamma-R clustering. Mediates RAC1-dependent reorganization of actin filaments. Required for synaptic vesicle transport. Controls the plasma membrane pool of PtdIns(4,5)P2 implicated in synaptic vesicle endocytosis and exocytosis. Plays a role in endocytosis mediated by clathrin and AP-2 (adaptor protein complex 2). Required for clathrin-coated pits assembly at the synapse. Participates in cell junction assembly. Modulates adherens junctions formation by facilitating CDH1/cadherin trafficking. Required for focal adhesion dynamics. Modulates the targeting of talins (TLN1 and TLN2) to the plasma membrane and their efficient assembly into focal adhesions. Regulates the interaction between talins (TLN1 and TLN2) and beta-integrins. Required for uropodium formation and retraction of the cell rear during directed migration. Has a role in growth factor-stimulated directional cell migration and adhesion. Required for talin assembly into nascent adhesions forming at the leading edge toward the direction of the growth factor. Negative regulator of T-cell activation and adhesion. Negatively regulates integrin alpha-L/beta-2 (LFA-1) polarization and adhesion induced by T-cell receptor. Together with PIP5K1A has a role during embryogenesis and together with PIP5K1B may have a role immediately after birth. The protein is Phosphatidylinositol 4-phosphate 5-kinase type-1 gamma of Homo sapiens (Human).